The primary structure comprises 81 residues: RNA-binding protein KhpA (81 aa).

Residues Lys34–Asp81 enclose the KH domain.

The protein belongs to the KhpA RNA-binding protein family. In terms of assembly, forms a complex with KhpB.

The protein resides in the cytoplasm. A probable RNA chaperone. Forms a complex with KhpB which binds to cellular RNA and controls its expression. Plays a role in peptidoglycan (PG) homeostasis and cell length regulation. The protein is RNA-binding protein KhpA of Bacillus subtilis (strain 168).